A 678-amino-acid polypeptide reads, in one-letter code: Probable antibacterial peptide polyprotein (678 aa).

14 consecutive repeat copies span residues 1–67 (MRSP…PEVR), 68–114 (ERRS…PEVR), 115–161 (ERRS…PEVR), 162–208 (ERRS…PEVR), 209–255 (ERRS…PEVR), 256–302 (ERGS…PEVR), 303–349 (ERRS…PEVR), 350–396 (ERRS…PEVR), 397–443 (ERRS…PEVR), 444–490 (ERRS…PEVR), 491–537 (ERRS…PEVR), 538–584 (ERRS…PEVR), 585–631 (ERRS…PEVR), and 632–678 (ERRS…PEVR). The interval 1–678 (MRSPRVIHLA…SEGVVLPEVR (678 aa)) is 14 X approximate tandem repeats. Residue threonine 32 is glycosylated (O-linked (GalNAc...) threonine). Disordered regions lie at residues 58–97 (SEAELLPEVRERRSPVDKGGYLPRPTPPRPVYRSRRDASL) and 113–678 (VRER…PEVR). Basic and acidic residues predominate over residues 64–73 (PEVRERRSPV). O-linked (GalNAc...) threonine glycosylation is found at threonine 83 and threonine 130. Positions 145-157 (ESELSPLSEAEVL) are enriched in low complexity. The span at 158–167 (PEVRERRSPV) shows a compositional bias: basic and acidic residues. An O-linked (GalNAc...) threonine glycan is attached at threonine 177. A compositionally biased stretch (low complexity) spans 188 to 204 (VASLESELSPLSEAEVL). Over residues 205-214 (PEVRERRSPV) the composition is skewed to basic and acidic residues. Threonine 224 and threonine 271 each carry an O-linked (GalNAc...) threonine glycan. A compositionally biased stretch (basic and acidic residues) spans 299–308 (PEVRERRSPV). A glycan (O-linked (GalNAc...) threonine) is linked at threonine 318. Low complexity predominate over residues 333 to 345 (ESELSPLSEAEVL). Positions 346–355 (PEVRERRSPV) are enriched in basic and acidic residues. O-linked (GalNAc...) threonine glycosylation occurs at threonine 365. The span at 380–392 (ESELSPLSEAEVL) shows a compositional bias: low complexity. Basic and acidic residues predominate over residues 393–402 (PEVRERRSPV). O-linked (GalNAc...) threonine glycosylation is present at threonine 412. Low complexity predominate over residues 427–439 (ESELSPLSEAEVL). The segment covering 440-449 (PEVRERRSPV) has biased composition (basic and acidic residues). O-linked (GalNAc...) threonine glycosylation is present at threonine 459. Over residues 474–486 (ESELSPLSEAEVL) the composition is skewed to low complexity. The span at 487–496 (PEVRERRSPV) shows a compositional bias: basic and acidic residues. The O-linked (GalNAc...) threonine glycan is linked to threonine 506. Positions 521–533 (ESELSPSSEAEVL) are enriched in low complexity. The segment covering 534-543 (PEVRERRSPV) has biased composition (basic and acidic residues). O-linked (GalNAc...) threonine glycosylation occurs at threonine 553. The span at 568 to 580 (ESELSPLSEAEVL) shows a compositional bias: low complexity. Residues 581–590 (PEVRERRSPV) are compositionally biased toward basic and acidic residues. O-linked (GalNAc...) threonine glycosylation occurs at threonine 600. Low complexity predominate over residues 615–627 (ESELSPLSEAEGL). The O-linked (GalNAc...) threonine glycan is linked to threonine 647.

It is found in the secreted. Has antibacterial activity in vitro. This is Probable antibacterial peptide polyprotein from Riptortus clavatus (Bean bug).